Reading from the N-terminus, the 318-residue chain is Ankyrin repeat and SOCS box protein 7 (318 aa).

ANK repeat units follow at residues 13 to 42 (QEEL…SPNG), 46 to 75 (NGWT…DPTV), 80 to 109 (GGFT…RSDI), 116 to 145 (DGWT…EVDP), 149 to 178 (KGTT…NIDI), 180 to 208 (NGFL…DTNL), and 213 to 242 (DGQT…DTNT). The SOCS box domain occupies 265–318 (LDFLQDVTRQPRTLQDLCRIKIRQCIGLQNLKLLDELPIAKVMKDYLKHKFDDI).

The protein belongs to the ankyrin SOCS box (ASB) family. As to quaternary structure, interacts with CUL5. Interacts with RNF7. Interacts with PSRC1.

It localises to the nucleus. Its subcellular location is the cytoplasm. The protein operates within protein modification; protein ubiquitination. Its function is as follows. Probable substrate-recognition component of a SCF-like ECS (Elongin-Cullin-SOCS-box protein) E3 ubiquitin-protein ligase complex which mediates the ubiquitination and subsequent proteasomal degradation of target proteins. Plays a role in spindle dynamics and genome integrity by targeting the mitotic progression protein PSRC1 for proteasomal degradation in a cell cycle-dependent manner. Also participates in meiosis by mediating the proper attachment between kinetochores and microtubules. This is Ankyrin repeat and SOCS box protein 7 (Asb7) from Mus musculus (Mouse).